The following is a 134-amino-acid chain: Ribosome-binding factor A (134 aa).

The protein belongs to the RbfA family. As to quaternary structure, monomer. Binds 30S ribosomal subunits, but not 50S ribosomal subunits or 70S ribosomes.

Its subcellular location is the cytoplasm. Its function is as follows. One of several proteins that assist in the late maturation steps of the functional core of the 30S ribosomal subunit. Associates with free 30S ribosomal subunits (but not with 30S subunits that are part of 70S ribosomes or polysomes). Required for efficient processing of 16S rRNA. May interact with the 5'-terminal helix region of 16S rRNA. This chain is Ribosome-binding factor A, found in Bartonella bacilliformis (strain ATCC 35685 / KC583 / Herrer 020/F12,63).